A 329-amino-acid polypeptide reads, in one-letter code: Serine/threonine-protein phosphatase PP2A catalytic subunit (329 aa).

The interval 1–25 (MDNNMEIDAARSPEPHHLSPTTDPG) is disordered. Residues 8–17 (DAARSPEPHH) show a composition bias toward basic and acidic residues. Residues Asp77, His79, Asp105, and Asn137 each coordinate Mn(2+). His138 serves as the catalytic Proton donor. Mn(2+) is bound by residues His187 and His261. Leu329 bears the Leucine methyl ester mark.

It belongs to the PPP phosphatase family. PP-2A subfamily. The cofactor is Mn(2+).

The catalysed reaction is O-phospho-L-seryl-[protein] + H2O = L-seryl-[protein] + phosphate. It catalyses the reaction O-phospho-L-threonyl-[protein] + H2O = L-threonyl-[protein] + phosphate. Its function is as follows. Involved in hyphal morphogenesis. This chain is Serine/threonine-protein phosphatase PP2A catalytic subunit (pphA), found in Emericella nidulans (strain FGSC A4 / ATCC 38163 / CBS 112.46 / NRRL 194 / M139) (Aspergillus nidulans).